Here is a 182-residue protein sequence, read N- to C-terminus: Ribosome maturation factor RimM (182 aa).

In terms of domain architecture, PRC barrel spans 101-182 (VDEYYWSDLK…RIYVNWGVDY (82 aa)).

Belongs to the RimM family. In terms of assembly, binds ribosomal protein uS19.

The protein resides in the cytoplasm. Its function is as follows. An accessory protein needed during the final step in the assembly of 30S ribosomal subunit, possibly for assembly of the head region. Essential for efficient processing of 16S rRNA. May be needed both before and after RbfA during the maturation of 16S rRNA. It has affinity for free ribosomal 30S subunits but not for 70S ribosomes. The polypeptide is Ribosome maturation factor RimM (Acinetobacter baylyi (strain ATCC 33305 / BD413 / ADP1)).